A 352-amino-acid polypeptide reads, in one-letter code: Heat-inducible transcription repressor HrcA (352 aa).

This sequence belongs to the HrcA family.

Functionally, negative regulator of class I heat shock genes (grpE-dnaK-dnaJ and groELS operons). Prevents heat-shock induction of these operons. This is Heat-inducible transcription repressor HrcA from Lactobacillus gasseri (strain ATCC 33323 / DSM 20243 / BCRC 14619 / CIP 102991 / JCM 1131 / KCTC 3163 / NCIMB 11718 / NCTC 13722 / AM63).